Here is a 559-residue protein sequence, read N- to C-terminus: DDB1- and CUL4-associated factor 10 (559 aa).

A disordered region spans residues 1–119; sequence MFPFGPHSPG…HGLGAGLGGP (119 aa). A phosphoserine mark is found at Ser-53, Ser-63, Ser-89, and Ser-92. Residues 56–86 are compositionally biased toward low complexity; that stretch reads RPGAPSLSPAPRSGELGLPGAPESSTASAPG. A compositionally biased stretch (pro residues) spans 87 to 97; the sequence is EPSPPSPPCRR. Arg-134 is subject to Omega-N-methylarginine. WD repeat units lie at residues 166–205, 209–247, 251–290, and 296–335; these read RTHGAVFNLEYSPDGSVLTVACEQTEVLLFDPISSKHIKT, AHEDCVNNIRFLDNRLFATCSDDTTIALWDLRKLNTKVC, GHTSWVKNIEYDTNTRLLVTSGFDGNVIIWDTNRYTEDGC, and FHTRFLMRMRLTPDCSKMLISTSSGYLLILHDLDLTKSLE. Phosphoserine is present on Ser-349. Residues 350 to 367 are compositionally biased toward low complexity; that stretch reads SSDLTTSSSSSGPRVSGS. The disordered stretch occupies residues 350 to 396; that stretch reads SSDLTTSSSSSGPRVSGSPCHHSDSNSSEKHMSRASQREGVSPRNSL. Residues 370-381 are compositionally biased toward basic and acidic residues; that stretch reads HHSDSNSSEKHM. 3 WD repeats span residues 408–448, 470–508, and 526–559; these read DHGN…QEGA, VGRGYIKELCFSPDGRMISSPHGYGIRLLGFDKQCSELV, and SHNDVVLTTKFSPTHCQIASGCLSGRVSLYQPKF.

This sequence belongs to the WD repeat DCAF10 family. Interacts with DDB1.

It functions in the pathway protein modification; protein ubiquitination. Functionally, may function as a substrate receptor for CUL4-DDB1 E3 ubiquitin-protein ligase complex. The polypeptide is DDB1- and CUL4-associated factor 10 (DCAF10) (Homo sapiens (Human)).